Consider the following 411-residue polypeptide: Putative competence-damage inducible protein (411 aa).

It belongs to the CinA family.

The polypeptide is Putative competence-damage inducible protein (Caldicellulosiruptor bescii (strain ATCC BAA-1888 / DSM 6725 / KCTC 15123 / Z-1320) (Anaerocellum thermophilum)).